The sequence spans 318 residues: tRNA-modifying protein YgfZ (318 aa).

Folate contacts are provided by W28 and W182.

Belongs to the tRNA-modifying YgfZ family.

The protein localises to the cytoplasm. Functionally, folate-binding protein involved in regulating the level of ATP-DnaA and in the modification of some tRNAs. It is probably a key factor in regulatory networks that act via tRNA modification, such as initiation of chromosomal replication. The sequence is that of tRNA-modifying protein YgfZ from Aliivibrio fischeri (strain ATCC 700601 / ES114) (Vibrio fischeri).